Consider the following 98-residue polypeptide: MSSRYLLSPAAQAHLEEIWDCTYDRWGVDQAEQYLRELQHAIDRAAANPRIGRACDEIRPGYRKLSAGSHTLFYRVTGEGTIDVVRVLHQRMDVDRNL.

Belongs to the RelE toxin family.

Its function is as follows. Toxic component of a type II toxin-antitoxin (TA) system. Its toxic effect is neutralized by coexpression with cognate antitoxin ParD1. In Mycobacterium tuberculosis (strain CDC 1551 / Oshkosh), this protein is Toxin ParE1 (parE1).